Here is a 360-residue protein sequence, read N- to C-terminus: 1-deoxy-D-xylulose 5-phosphate reductoisomerase (360 aa).

5 residues coordinate NADPH: S7, G8, S9, I10, and N115. K116 is a binding site for 1-deoxy-D-xylulose 5-phosphate. E117 lines the NADPH pocket. Residue D135 participates in Mn(2+) binding. 4 residues coordinate 1-deoxy-D-xylulose 5-phosphate: S136, E137, S159, and H182. Mn(2+) is bound at residue E137. NADPH is bound at residue G188. 1-deoxy-D-xylulose 5-phosphate-binding residues include S195, N200, K201, and E204. Mn(2+) is bound at residue E204.

It belongs to the DXR family. Mg(2+) is required as a cofactor. Mn(2+) serves as cofactor.

The catalysed reaction is 2-C-methyl-D-erythritol 4-phosphate + NADP(+) = 1-deoxy-D-xylulose 5-phosphate + NADPH + H(+). The protein operates within isoprenoid biosynthesis; isopentenyl diphosphate biosynthesis via DXP pathway; isopentenyl diphosphate from 1-deoxy-D-xylulose 5-phosphate: step 1/6. Functionally, catalyzes the NADPH-dependent rearrangement and reduction of 1-deoxy-D-xylulose-5-phosphate (DXP) to 2-C-methyl-D-erythritol 4-phosphate (MEP). This chain is 1-deoxy-D-xylulose 5-phosphate reductoisomerase, found in Campylobacter fetus subsp. fetus (strain 82-40).